We begin with the raw amino-acid sequence, 187 residues long: Protein ECM23 (187 aa).

Disordered stretches follow at residues 106–127 (GKKSLAGYRPKSRKKQTILPNG) and 167–187 (KKIRSQQSSDDGTKNFIFKNK). The segment at 126-180 (NGQPKECATCGDTWTSQWRSGPNGNVELCSRCGIAYRKKMEKKIRSQQSSDDGTK) adopts a GATA-type zinc-finger fold.

Its function is as follows. Involved in morphogenesis. May be involved in cell wall organization and biogenesis. The polypeptide is Protein ECM23 (ECM23) (Saccharomyces cerevisiae (strain ATCC 204508 / S288c) (Baker's yeast)).